The sequence spans 444 residues: MTKTYHFIGIKGSGMSALALMLHQMGHKVQGSDVDKYYFTQRGLEQAGISILPFDEKNIQPDFEIIAGNAFRPDNNVEIAYADANGISYKRYHEFLGSFMRDFVSLGVAGAHGKTSTTGILSHVLSNITDTSYLIGDGTGRGSANAKYFVFESDEYERHFMPYHPEYSIITNIDFDHPDYFTSLEDVFNAFNDYAKQITKGLFIYGEDEQLRRITSNAPIYYYGFKEEGNDFVAHDLLRSTSGSGFKVSFRGQELGEFQIPSFGRHNIMNATAVIGLLYTAGLDLNLVREHLKTFGGVKRRFTEKIVNETVIIDDFAHHPTEIIATLDAARQKYPSKEIVAIFQPHTFTRTIALLDEFAEALNQADSVYLAQIYGSAREVDKGDVKVEDLAEKIVKRAKVIDVDNVSPLLDHDNAVYVFMGAGDIQTYEYSFERLLSNLTSNVQ.

110–116 (GAHGKTS) is an ATP binding site.

It belongs to the MurCDEF family.

It is found in the cytoplasm. It catalyses the reaction UDP-N-acetyl-alpha-D-muramate + L-alanine + ATP = UDP-N-acetyl-alpha-D-muramoyl-L-alanine + ADP + phosphate + H(+). It functions in the pathway cell wall biogenesis; peptidoglycan biosynthesis. In terms of biological role, cell wall formation. This chain is UDP-N-acetylmuramate--L-alanine ligase, found in Streptococcus sanguinis (strain SK36).